A 500-amino-acid chain; its full sequence is Glycerol kinase (500 aa).

ADP is bound at residue Thr-12. Residues Thr-12, Thr-13, and Ser-14 each coordinate ATP. Thr-12 contacts sn-glycerol 3-phosphate. An ADP-binding site is contributed by Arg-16. Residues Arg-82, Glu-83, Tyr-134, and Asp-244 each coordinate sn-glycerol 3-phosphate. 5 residues coordinate glycerol: Arg-82, Glu-83, Tyr-134, Asp-244, and Gln-245. Thr-266 and Gly-309 together coordinate ADP. 4 residues coordinate ATP: Thr-266, Gly-309, Gln-313, and Gly-410. Residues Gly-410 and Asn-414 each contribute to the ADP site.

It belongs to the FGGY kinase family. As to quaternary structure, homotetramer and homodimer (in equilibrium).

It catalyses the reaction glycerol + ATP = sn-glycerol 3-phosphate + ADP + H(+). Its pathway is polyol metabolism; glycerol degradation via glycerol kinase pathway; sn-glycerol 3-phosphate from glycerol: step 1/1. Activated by phosphorylation and inhibited by fructose 1,6-bisphosphate (FBP). Its function is as follows. Key enzyme in the regulation of glycerol uptake and metabolism. Catalyzes the phosphorylation of glycerol to yield sn-glycerol 3-phosphate. The polypeptide is Glycerol kinase (Alkaliphilus metalliredigens (strain QYMF)).